The chain runs to 314 residues: 2-dehydro-3-deoxygluconokinase (314 aa).

Substrate contacts are provided by residues 28 to 32, Tyr88, 102 to 104, and Arg170; these read GDTLN and YWR. ATP contacts are provided by residues 168-170, 228-233, and 260-263; these read NYR, KCGKNG, and SAGD. Asp263 provides a ligand contact to substrate. Asp263 acts as the Proton acceptor in catalysis.

Belongs to the carbohydrate kinase PfkB family.

It carries out the reaction 2-dehydro-3-deoxy-D-gluconate + ATP = 2-dehydro-3-deoxy-6-phospho-D-gluconate + ADP + H(+). Its pathway is carbohydrate acid metabolism; 2-dehydro-3-deoxy-D-gluconate degradation; D-glyceraldehyde 3-phosphate and pyruvate from 2-dehydro-3-deoxy-D-gluconate: step 1/2. Its function is as follows. Catalyzes the phosphorylation of 2-keto-3-deoxygluconate (KDG) to produce 2-keto-3-deoxy-6-phosphogluconate (KDPG). The protein is 2-dehydro-3-deoxygluconokinase (kdgK) of Haemophilus influenzae (strain ATCC 51907 / DSM 11121 / KW20 / Rd).